Here is a 283-residue protein sequence, read N- to C-terminus: Nucleotide-binding protein Hore_15880 (283 aa).

Residue 8-15 (GMSGAGKS) coordinates ATP. GTP is bound at residue 57 to 60 (DIRG).

It belongs to the RapZ-like family.

Functionally, displays ATPase and GTPase activities. In Halothermothrix orenii (strain H 168 / OCM 544 / DSM 9562), this protein is Nucleotide-binding protein Hore_15880.